Here is a 281-residue protein sequence, read N- to C-terminus: Nuclear receptor-interacting protein 2 (281 aa).

The segment at 18 to 85 (ESCSTGQRQA…RAHLSQQRRL (68 aa)) is disordered. Residues 36-47 (TPPPSSPWPTPP) are compositionally biased toward pro residues. Residues 55-78 (QEARRDEGEARTRGQEAQLRDRAH) show a composition bias toward basic and acidic residues. Positions 244–248 (LQTLL) match the LXXLL motif motif.

In terms of assembly, interacts with NR1F2, RARA and THRB in a ligand-dependent manner.

The protein localises to the nucleus. In terms of biological role, down-regulates transcriptional activation by nuclear receptors such as NR1F2. The protein is Nuclear receptor-interacting protein 2 (NRIP2) of Homo sapiens (Human).